Consider the following 385-residue polypeptide: Phospho-N-acetylmuramoyl-pentapeptide-transferase (385 aa).

Helical transmembrane passes span 23-43, 79-99, 103-123, 135-155, 186-206, 218-238, 258-278, 282-302, 307-327, and 362-382; these read FITV…LGAG, MGGI…GAVA, VWLS…DDYV, AWYK…VLYF, LGVD…VTAV, GLTT…VYVS, LTVF…YNGY, VFMG…TILM, LLLP…IVQT, and KIVT…LLIL.

It belongs to the glycosyltransferase 4 family. MraY subfamily. Requires Mg(2+) as cofactor.

It is found in the cell inner membrane. It catalyses the reaction UDP-N-acetyl-alpha-D-muramoyl-L-alanyl-gamma-D-glutamyl-meso-2,6-diaminopimeloyl-D-alanyl-D-alanine + di-trans,octa-cis-undecaprenyl phosphate = di-trans,octa-cis-undecaprenyl diphospho-N-acetyl-alpha-D-muramoyl-L-alanyl-D-glutamyl-meso-2,6-diaminopimeloyl-D-alanyl-D-alanine + UMP. The protein operates within cell wall biogenesis; peptidoglycan biosynthesis. Catalyzes the initial step of the lipid cycle reactions in the biosynthesis of the cell wall peptidoglycan: transfers peptidoglycan precursor phospho-MurNAc-pentapeptide from UDP-MurNAc-pentapeptide onto the lipid carrier undecaprenyl phosphate, yielding undecaprenyl-pyrophosphoryl-MurNAc-pentapeptide, known as lipid I. In Salinibacter ruber (strain DSM 13855 / M31), this protein is Phospho-N-acetylmuramoyl-pentapeptide-transferase.